The following is a 476-amino-acid chain: Adenosylhomocysteinase (476 aa).

Substrate contacts are provided by T67, D142, and E202. NAD(+) is bound at residue 203 to 205 (TTT). 2 residues coordinate substrate: K232 and D236. Residues N237, 266-271 (GYGDVG), E289, N324, 345-347 (IGH), and N390 each bind NAD(+).

It belongs to the adenosylhomocysteinase family. It depends on NAD(+) as a cofactor.

The protein resides in the cytoplasm. The enzyme catalyses S-adenosyl-L-homocysteine + H2O = L-homocysteine + adenosine. The protein operates within amino-acid biosynthesis; L-homocysteine biosynthesis; L-homocysteine from S-adenosyl-L-homocysteine: step 1/1. Its function is as follows. May play a key role in the regulation of the intracellular concentration of adenosylhomocysteine. This is Adenosylhomocysteinase from Synechococcus sp. (strain CC9902).